We begin with the raw amino-acid sequence, 289 residues long: Thioredoxin-like protein 1 (289 aa).

Positions 2 to 109 constitute a Thioredoxin domain; sequence VGVKPVGSDP…EEKIKQHLEN (108 aa). Cysteine 34 and cysteine 37 are joined by a disulfide. Residue serine 113 is modified to Phosphoserine. The PITH domain maps to 115–285; that stretch reads EDTDIPKGYM…NDFKRVVGKK (171 aa).

As to quaternary structure, component of the 19S regulatory cap of the 26S proteasome. Interacts with PSMD14/RPN11. Interacts with, and reduces EEF1A1.

Its subcellular location is the cytoplasm. The protein resides in the nucleus. In terms of biological role, active thioredoxin with a redox potential of about -250 mV. The chain is Thioredoxin-like protein 1 (Txnl1) from Rattus norvegicus (Rat).